A 183-amino-acid chain; its full sequence is NADH-quinone oxidoreductase subunit A (183 aa).

Helical transmembrane passes span 11-31 (IIAF…VPLL), 63-83 (FYLV…LYAW), and 98-118 (MVIF…TGAL). Residues 160-183 (GHIPAQSSGRMKSKTSTAPSSKQE) are disordered. Polar residues predominate over residues 164–183 (AQSSGRMKSKTSTAPSSKQE).

This sequence belongs to the complex I subunit 3 family. In terms of assembly, NDH-1 is composed of 14 different subunits. Subunits NuoA, H, J, K, L, M, N constitute the membrane sector of the complex.

It is found in the cell inner membrane. It catalyses the reaction a quinone + NADH + 5 H(+)(in) = a quinol + NAD(+) + 4 H(+)(out). Functionally, NDH-1 shuttles electrons from NADH, via FMN and iron-sulfur (Fe-S) centers, to quinones in the respiratory chain. The immediate electron acceptor for the enzyme in this species is believed to be ubiquinone. Couples the redox reaction to proton translocation (for every two electrons transferred, four hydrogen ions are translocated across the cytoplasmic membrane), and thus conserves the redox energy in a proton gradient. The polypeptide is NADH-quinone oxidoreductase subunit A (Acinetobacter baylyi (strain ATCC 33305 / BD413 / ADP1)).